Reading from the N-terminus, the 513-residue chain is ATP synthase subunit alpha (513 aa).

Residue 169-176 (GDRQTGKT) participates in ATP binding.

The protein belongs to the ATPase alpha/beta chains family. As to quaternary structure, F-type ATPases have 2 components, CF(1) - the catalytic core - and CF(0) - the membrane proton channel. CF(1) has five subunits: alpha(3), beta(3), gamma(1), delta(1), epsilon(1). CF(0) has three main subunits: a(1), b(2) and c(9-12). The alpha and beta chains form an alternating ring which encloses part of the gamma chain. CF(1) is attached to CF(0) by a central stalk formed by the gamma and epsilon chains, while a peripheral stalk is formed by the delta and b chains.

It is found in the cell inner membrane. The catalysed reaction is ATP + H2O + 4 H(+)(in) = ADP + phosphate + 5 H(+)(out). Its function is as follows. Produces ATP from ADP in the presence of a proton gradient across the membrane. The alpha chain is a regulatory subunit. The chain is ATP synthase subunit alpha from Thioalkalivibrio sulfidiphilus (strain HL-EbGR7).